The sequence spans 469 residues: 3-isopropylmalate dehydratase large subunit (469 aa).

C350, C410, and C413 together coordinate [4Fe-4S] cluster.

The protein belongs to the aconitase/IPM isomerase family. LeuC type 1 subfamily. In terms of assembly, heterodimer of LeuC and LeuD. Requires [4Fe-4S] cluster as cofactor.

It carries out the reaction (2R,3S)-3-isopropylmalate = (2S)-2-isopropylmalate. Its pathway is amino-acid biosynthesis; L-leucine biosynthesis; L-leucine from 3-methyl-2-oxobutanoate: step 2/4. Functionally, catalyzes the isomerization between 2-isopropylmalate and 3-isopropylmalate, via the formation of 2-isopropylmaleate. This is 3-isopropylmalate dehydratase large subunit from Rhodopseudomonas palustris (strain ATCC BAA-98 / CGA009).